We begin with the raw amino-acid sequence, 836 residues long: MRIWEKIFGTYSQRELKRVIPIVDKIDKLDQTMQKLTDEELKNKTNEFKERLSKGETLDDILVEAFAVAREAAWRVVKLKPYREQLIGGIILHQGRIAEMKTGEGKTLVATLPAYLNALKGEGVHIVTVNDYLAKRDKETMGAIYEFLGLTVGVILHDLEHNERQEAYNCDITYGTNSELGFDYLRDNMVVYKEERVQRKLNFSIVDEVDSILIDEARTPLIISGQGEKSTEFYKVADYFAKSLIKEEDFTVDEKASAVMLTDKGIEKAEAYFKLENYADPENMEIQHHVVQALKANYSMKKDTDYMVRDGEVLIVDEFTGRVMDGRRYSDGLHQAIEAKEGVNVERESKTLATITYQNFFRMYDKLSGMTGTAQTEEVEFREIYGLDVVVIPTHKPVLRIDNSDVVYKSEKGKYMAIVDEIVETHKKGQPVLVGTVSIEKSELISEMLKRKGVPHQVLNAKYHEKEAEIVSHAGEYGMVTIATNMAGRGTDIKLEEEVIKAGGLKIIGTERHESRRIDNQLRGRSGRQGDPGASRFYVSLEDDLMRIFGSDKLKGIVEKLGLGDDEAIESKMVSNAIENAQKKVEGNNFDIRKTLIQYDDVINKQREIIYKQRSEVLEGADLKDQIQEMIRDVINSVVDSHISDIEEEFKEELDKLIKFLEDIFLPKDYIKVEHLENLSNDEIKEKLYDIAKNIYTDKEEEFESEQMRDIERVILLRVVDTKWMDHIDNMDHLKQGIGLRAYKQQDPVQAYQFEGSQMFDEMIYNIKVDTVRYLFRVQIEKAPEREQVAKETSTNQGGDDTLKKQPIKKEPKIGRNDLCPCGSGKKYKNCCGREV.

ATP contacts are provided by residues Gln-85, Gly-103–Thr-107, and Asp-492. Positions Arg-786–Asn-817 are disordered. Residues Asp-801 to Arg-816 are compositionally biased toward basic and acidic residues. Positions 820, 822, 831, and 832 each coordinate Zn(2+).

The protein belongs to the SecA family. Monomer and homodimer. Part of the essential Sec protein translocation apparatus which comprises SecA, SecYEG and auxiliary proteins SecDF. Other proteins may also be involved. Zn(2+) serves as cofactor.

Its subcellular location is the cell membrane. It localises to the cytoplasm. It catalyses the reaction ATP + H2O + cellular proteinSide 1 = ADP + phosphate + cellular proteinSide 2.. Part of the Sec protein translocase complex. Interacts with the SecYEG preprotein conducting channel. Has a central role in coupling the hydrolysis of ATP to the transfer of proteins into and across the cell membrane, serving as an ATP-driven molecular motor driving the stepwise translocation of polypeptide chains across the membrane. The chain is Protein translocase subunit SecA from Clostridium tetani (strain Massachusetts / E88).